Here is a 150-residue protein sequence, read N- to C-terminus: Ribonuclease H (150 aa).

The region spanning 1-141 (MKSIEVHTDG…VDVLARNQAI (141 aa)) is the RNase H type-1 domain. Residues Asp-9, Glu-47, Asp-69, and Asp-133 each coordinate Mg(2+).

It belongs to the RNase H family. Monomer. Requires Mg(2+) as cofactor.

It localises to the cytoplasm. It catalyses the reaction Endonucleolytic cleavage to 5'-phosphomonoester.. Functionally, endonuclease that specifically degrades the RNA of RNA-DNA hybrids. The polypeptide is Ribonuclease H (Xanthomonas campestris pv. campestris (strain 8004)).